The primary structure comprises 254 residues: Type III pantothenate kinase 2 (254 aa).

Residue 6 to 13 participates in ATP binding; sequence DMGNSHIH. 107-110 contributes to the substrate binding site; the sequence is GADR. The Proton acceptor role is filled by Asp109. K(+) is bound at residue Asp130. Thr133 provides a ligand contact to ATP. Thr185 lines the substrate pocket.

It belongs to the type III pantothenate kinase family. As to quaternary structure, homodimer. Requires NH4(+) as cofactor. It depends on K(+) as a cofactor.

It is found in the cytoplasm. It carries out the reaction (R)-pantothenate + ATP = (R)-4'-phosphopantothenate + ADP + H(+). It participates in cofactor biosynthesis; coenzyme A biosynthesis; CoA from (R)-pantothenate: step 1/5. Catalyzes the phosphorylation of pantothenate (Pan), the first step in CoA biosynthesis. The polypeptide is Type III pantothenate kinase 2 (Francisella tularensis subsp. holarctica (strain LVS)).